A 340-amino-acid chain; its full sequence is Phosphoribosylformylglycinamidine cyclo-ligase (340 aa).

Belongs to the AIR synthase family.

The protein localises to the cytoplasm. It carries out the reaction 2-formamido-N(1)-(5-O-phospho-beta-D-ribosyl)acetamidine + ATP = 5-amino-1-(5-phospho-beta-D-ribosyl)imidazole + ADP + phosphate + H(+). It functions in the pathway purine metabolism; IMP biosynthesis via de novo pathway; 5-amino-1-(5-phospho-D-ribosyl)imidazole from N(2)-formyl-N(1)-(5-phospho-D-ribosyl)glycinamide: step 2/2. This Streptococcus pneumoniae (strain P1031) protein is Phosphoribosylformylglycinamidine cyclo-ligase.